Here is a 308-residue protein sequence, read N- to C-terminus: Porphobilinogen deaminase (308 aa).

S-(dipyrrolylmethanemethyl)cysteine is present on Cys240.

This sequence belongs to the HMBS family. As to quaternary structure, monomer. It depends on dipyrromethane as a cofactor.

The enzyme catalyses 4 porphobilinogen + H2O = hydroxymethylbilane + 4 NH4(+). The protein operates within porphyrin-containing compound metabolism; protoporphyrin-IX biosynthesis; coproporphyrinogen-III from 5-aminolevulinate: step 2/4. Functionally, tetrapolymerization of the monopyrrole PBG into the hydroxymethylbilane pre-uroporphyrinogen in several discrete steps. This chain is Porphobilinogen deaminase, found in Desulfitobacterium hafniense (strain DSM 10664 / DCB-2).